The primary structure comprises 742 residues: Envelope glycoprotein H (742 aa).

The first 23 residues, 1 to 23 (MRPGLPSYLIILAVCLFSHLLSS), serve as a signal peptide directing secretion. Residues 24–719 (RYGAEAVSEP…VVDATDSRLL (696 aa)) lie on the Virion surface side of the membrane. N-linked (GlcNAc...) asparagine; by host glycosylation is found at asparagine 55, asparagine 62, asparagine 67, and asparagine 192. Cysteine 195 and cysteine 211 are joined by a disulfide. The segment at 217–280 (YLIDELRYVK…QTEKHELLVL (64 aa)) is interaction with gL. Cystine bridges form between cysteine 330/cysteine 383, cysteine 495/cysteine 522, and cysteine 571/cysteine 624. Residues asparagine 641 and asparagine 700 are each glycosylated (N-linked (GlcNAc...) asparagine; by host). Residues 720-740 (MMSVYALSAIIGIYLLYRMLK) form a helical membrane-spanning segment. Residues 741–742 (TC) are Intravirion-facing.

The protein belongs to the herpesviridae glycoprotein H family. As to quaternary structure, interacts with glycoprotein L (gL); this interaction is necessary for the correct processing and cell surface expression of gH. The heterodimer gH/gL seems to interact with gB trimers during fusion. Forms the envelope pentamer complex (PC) composed of gH, gL, UL128, UL130, and UL131A. The pentamer interacts with host NRP2. Forms the envelope trimer complex composed of gH, gL, and gO. The trimer interacts with host PDGFRA. The trimer also interacts with host EPHA2. The trimer also interacts with host TGFBR3. Interacts with UL116. N-glycosylated, O-glycosylated, and sialylated.

The protein resides in the virion membrane. The protein localises to the host cell membrane. Its subcellular location is the host endosome membrane. The heterodimer glycoprotein H-glycoprotein L is required for the fusion of viral and plasma membranes leading to virus entry into the host cell. Following initial binding to host receptor, membrane fusion is mediated by the fusion machinery composed of gB and the heterodimer gH/gL. May also be involved in the fusion between the virion envelope and the outer nuclear membrane during virion morphogenesis. In human cytomegalovirus, forms two distincts complexes to mediate viral entry, a trimer and a pentamer at the surface of the virion envelope. The gH-gL-gO trimer is required for infection in fibroblasts by interacting with host PDGFRA, and in glioblastoma cells by interacting with host EPHA2. Thsi trimer may also be required in other cell types using host TGFBR3. The gH-gL-UL128-UL130-UL131A pentamer is essential for viral entry in epithelial, endothelial and myeloid cells via interaction with host NRP2. This chain is Envelope glycoprotein H, found in Human cytomegalovirus (strain Merlin) (HHV-5).